The primary structure comprises 322 residues: Putative ankyrin repeat protein L897 (322 aa).

ANK repeat units lie at residues 88 to 117 (DNEYYTYFALSIGAMDVFKWLISHGFSYDM), 181 to 210 (NIIDVIEYAVQINNCDIIKILVKKFIFWAN), and 248 to 277 (NKNEALKYAIMMKNYDMIELLINYNIQTDH).

The protein is Putative ankyrin repeat protein L897 of Acanthamoeba polyphaga (Amoeba).